The sequence spans 550 residues: Envelope glycoprotein E (550 aa).

A signal peptide spans 1 to 23 (MELLAASRACIFFGLVTVLDAWG). Residues 24–408 (VQQVELSEGA…GAWTRHYLAF (385 aa)) are Virion surface-facing. The N-linked (GlcNAc...) asparagine; by host glycan is linked to asparagine 47. The segment at 65–91 (CAGDISVKKVCVSHSLCEDNIIIGKHC) is interaction with gI. N-linked (GlcNAc...) asparagine; by host glycosylation is found at asparagine 109, asparagine 122, and asparagine 241. Disulfide bonds link cysteine 247-cysteine 273 and cysteine 256-cysteine 265. Residue asparagine 291 is glycosylated (N-linked (GlcNAc...) asparagine; by host). Cysteine 292 and cysteine 303 are oxidised to a cystine. The chain crosses the membrane as a helical span at residues 409 to 425 (LLVIICTCAALLVALVV). Residues 426-550 (WGCILYIRSN…VASKLKSILK (125 aa)) lie on the Intravirion side of the membrane. Residues 449–452 (YTSV) carry the Internalization motif motif. The tract at residues 468–482 (ASDSDDSFDSDSDEE) is acidic. The segment covering 471–484 (SDDSFDSDSDEELE) has biased composition (acidic residues). The disordered stretch occupies residues 471–513 (SDDSFDSDSDEELEYPPPPKPAPQLPPYQFVDGGDAPSGRSGF). Over residues 485-496 (YPPPPKPAPQLP) the composition is skewed to pro residues.

Belongs to the alphaherpesvirinae glycoprotein E family. In terms of assembly, interacts with gI. Post-translationally, phosphorylated on serines within the acidic cluster. Phosphorylation determines whether endocytosed viral gE traffics to the trans-Golgi network or recycles to the cell membrane.

The protein resides in the virion membrane. Its subcellular location is the host cell membrane. The protein localises to the host cell junction. It is found in the host Golgi apparatus membrane. It localises to the host endosome membrane. In epithelial cells, the heterodimer gE/gI is required for the cell-to-cell spread of the virus, by sorting nascent virions to cell junctions. Once the virus reaches the cell junctions, virus particles can spread to adjacent cells extremely rapidly through interactions with cellular receptors that accumulate at these junctions. Implicated in basolateral spread in polarized cells. In neuronal cells, gE/gI is essential for the anterograde spread of the infection throughout the host nervous system. Together with US9, the heterodimer gE/gI is involved in the sorting and transport of viral structural components toward axon tips. This is Envelope glycoprotein E (gE) from Equus caballus (Horse).